Here is a 219-residue protein sequence, read N- to C-terminus: ATP synthase subunit a (219 aa).

The next 6 membrane-spanning stretches (helical) occupy residues 16–36 (LSNW…FWLI), 57–79 (LLMG…FILF), 96–116 (LAVT…YTWI), 122–142 (ALAH…MVLM), 158–178 (LAAN…QGTL), and 184–204 (TSIV…VAII).

Belongs to the ATPase A chain family. In terms of assembly, F-type ATPases have 2 components, CF(1) - the catalytic core - and CF(0) - the membrane proton channel. CF(1) has five subunits: alpha(3), beta(3), gamma(1), delta(1), epsilon(1). CF(0) has three main subunits: a, b and c.

It localises to the mitochondrion inner membrane. In terms of biological role, mitochondrial membrane ATP synthase (F(1)F(0) ATP synthase or Complex V) produces ATP from ADP in the presence of a proton gradient across the membrane which is generated by electron transport complexes of the respiratory chain. F-type ATPases consist of two structural domains, F(1) - containing the extramembraneous catalytic core and F(0) - containing the membrane proton channel, linked together by a central stalk and a peripheral stalk. During catalysis, ATP synthesis in the catalytic domain of F(1) is coupled via a rotary mechanism of the central stalk subunits to proton translocation. Key component of the proton channel; it may play a direct role in the translocation of protons across the membrane. In Artemia franciscana (Brine shrimp), this protein is ATP synthase subunit a (ATP6).